The sequence spans 184 residues: J-type co-chaperone JAC1, mitochondrial (184 aa).

The transit peptide at 1-10 (MLKYLVQRRF) directs the protein to the mitochondrion. The region spanning 13–82 (TFYELFPKTF…LRRSQYMLKL (70 aa)) is the J domain. Residues 48–50 (HPD) carry the HSP70 binding motif. The tract at residues 71–184 (DPLRRSQYML…APGKQLEMNH (114 aa)) is interaction with ISU1.

It belongs to the HscB family. In terms of assembly, interacts with ISU1 and SSQ1.

It is found in the mitochondrion matrix. Co-chaperone required for the assembly of iron-sulfur (Fe/S) clusters in mitochondria. Stimulates the ATPase activity of its specialized Hsp70 chaperone partner SSQ1, to mediate the transfer of iron-sulfur clusters from ISU1 to GRX5. Binds to the substrate protein ISU1 and targets it to SSQ1. The chain is J-type co-chaperone JAC1, mitochondrial from Saccharomyces cerevisiae (strain ATCC 204508 / S288c) (Baker's yeast).